Here is a 174-residue protein sequence, read N- to C-terminus: uncharacterized protein (174 aa).

The chain crosses the membrane as a helical span at residues 126 to 146 (AIDEFIITVIPVVLGSGIPLF).

This sequence to B.subtilis YyaP.

Its subcellular location is the membrane. This is an uncharacterized protein from Bacillus subtilis (strain 168).